The following is a 311-amino-acid chain: DNA replication terminus site-binding protein (311 aa).

Belongs to the Tus family.

It is found in the cytoplasm. In terms of biological role, trans-acting protein required for termination of DNA replication. Binds to DNA replication terminator sequences (terA to terF) to prevent the passage of replication forks. The termination efficiency will be affected by the affinity of this protein for the terminator sequence. In Yersinia pestis, this protein is DNA replication terminus site-binding protein.